A 233-amino-acid polypeptide reads, in one-letter code: Nickel import system ATP-binding protein NikE (233 aa).

The ABC transporter domain maps to 2-228 (IELKHVTFGY…DRHPYTKELV (227 aa)). An ATP-binding site is contributed by 35–42 (GESGCGKS).

This sequence belongs to the ABC transporter superfamily. The complex is composed of two ATP-binding proteins (NikD and NikE), two transmembrane proteins (NikB and NikC) and a solute-binding protein (NikA).

Its subcellular location is the cell membrane. The enzyme catalyses Ni(2+)(out) + ATP + H2O = Ni(2+)(in) + ADP + phosphate + H(+). Functionally, part of the ABC transporter complex NikABCDE (Opp2) involved in nickel import. Probably responsible for energy coupling to the transport system. The chain is Nickel import system ATP-binding protein NikE from Staphylococcus aureus (strain USA300).